A 463-amino-acid polypeptide reads, in one-letter code: UDP-N-acetylmuramate--L-alanine ligase (463 aa).

112–118 (GTHGKTT) is an ATP binding site.

It belongs to the MurCDEF family.

The protein resides in the cytoplasm. The enzyme catalyses UDP-N-acetyl-alpha-D-muramate + L-alanine + ATP = UDP-N-acetyl-alpha-D-muramoyl-L-alanine + ADP + phosphate + H(+). Its pathway is cell wall biogenesis; peptidoglycan biosynthesis. Its function is as follows. Cell wall formation. This chain is UDP-N-acetylmuramate--L-alanine ligase, found in Thiobacillus denitrificans (strain ATCC 25259 / T1).